A 495-amino-acid polypeptide reads, in one-letter code: Trimethylamine methyltransferase MttB1 (495 aa).

Position 334 (Pyl334) is a non-standard amino acid, pyrrolysine.

The protein belongs to the trimethylamine methyltransferase family. Can form a complex with MttC.

It carries out the reaction Co(I)-[trimethylamine-specific corrinoid protein] + trimethylamine + H(+) = methyl-Co(III)-[trimethylamine-specific corrinoid protein] + dimethylamine. The protein operates within one-carbon metabolism; methanogenesis from trimethylamine. Its function is as follows. Catalyzes the transfer of a methyl group from trimethylamine to the corrinoid cofactor of MttC. This chain is Trimethylamine methyltransferase MttB1 (mttB1), found in Methanosarcina mazei (strain ATCC BAA-159 / DSM 3647 / Goe1 / Go1 / JCM 11833 / OCM 88) (Methanosarcina frisia).